Here is an 88-residue protein sequence, read N- to C-terminus: uncharacterized protein (88 aa).

A disordered region spans residues 1 to 31 (MIPRDPRSPAPDLSAINQPAGRAERRSGPAT).

This is an uncharacterized protein from Escherichia coli.